Consider the following 372-residue polypeptide: Glutamate 5-kinase (372 aa).

Residue lysine 14 participates in ATP binding. Substrate is bound by residues serine 54, aspartate 141, and asparagine 153. Position 173-174 (173-174 (TD)) interacts with ATP. The PUA domain occupies 280–358 (RGTLVLDAGA…DAIEKLLGYV (79 aa)).

This sequence belongs to the glutamate 5-kinase family.

Its subcellular location is the cytoplasm. The catalysed reaction is L-glutamate + ATP = L-glutamyl 5-phosphate + ADP. It functions in the pathway amino-acid biosynthesis; L-proline biosynthesis; L-glutamate 5-semialdehyde from L-glutamate: step 1/2. In terms of biological role, catalyzes the transfer of a phosphate group to glutamate to form L-glutamate 5-phosphate. The sequence is that of Glutamate 5-kinase from Ectopseudomonas mendocina (strain ymp) (Pseudomonas mendocina).